Reading from the N-terminus, the 181-residue chain is Negative modulator of initiation of replication (181 aa).

3 interaction with DNA regions span residues 87 to 88 (AV), 116 to 120 (RTRVY), and 150 to 156 (NTNTGRK).

This sequence belongs to the SeqA family. In terms of assembly, homodimer. Polymerizes to form helical filaments.

It localises to the cytoplasm. In terms of biological role, negative regulator of replication initiation, which contributes to regulation of DNA replication and ensures that replication initiation occurs exactly once per chromosome per cell cycle. Binds to pairs of hemimethylated GATC sequences in the oriC region, thus preventing assembly of replication proteins and re-initiation at newly replicated origins. Repression is relieved when the region becomes fully methylated. This is Negative modulator of initiation of replication from Shigella dysenteriae serotype 1 (strain Sd197).